A 913-amino-acid polypeptide reads, in one-letter code: Protein translocase subunit SecA (913 aa).

ATP-binding positions include glutamine 87, 105-109 (GEGKT), and aspartate 512. Positions 864-913 (LDQPEEEPAEVEGQPDVAVASVRTEPKIGRNEPCPCGSGKKYKHCHGQVQ) are disordered. Zn(2+) is bound by residues cysteine 897, cysteine 899, cysteine 908, and histidine 909. The segment covering 903-913 (KKYKHCHGQVQ) has biased composition (basic residues).

It belongs to the SecA family. In terms of assembly, monomer and homodimer. Part of the essential Sec protein translocation apparatus which comprises SecA, SecYEG and auxiliary proteins SecDF-YajC and YidC. Zn(2+) serves as cofactor.

The protein resides in the cell inner membrane. Its subcellular location is the cytoplasm. The enzyme catalyses ATP + H2O + cellular proteinSide 1 = ADP + phosphate + cellular proteinSide 2.. Its function is as follows. Part of the Sec protein translocase complex. Interacts with the SecYEG preprotein conducting channel. Has a central role in coupling the hydrolysis of ATP to the transfer of proteins into and across the cell membrane, serving both as a receptor for the preprotein-SecB complex and as an ATP-driven molecular motor driving the stepwise translocation of polypeptide chains across the membrane. This Stutzerimonas stutzeri (strain A1501) (Pseudomonas stutzeri) protein is Protein translocase subunit SecA.